The sequence spans 834 residues: Phenylalanine--tRNA ligase beta subunit (834 aa).

Residues 48–159 (GDIERPLVVG…GTAEPGTDAN (112 aa)) enclose the tRNA-binding domain. The B5 domain occupies 411 to 492 (PAPEPIRMDI…RLEGLEQIPS (82 aa)). Mg(2+)-binding residues include Asp470, Asp476, Glu479, and Glu480. In terms of domain architecture, FDX-ACB spans 740-833 (SPFPAVLQDV…AADAVGAVLR (94 aa)).

The protein belongs to the phenylalanyl-tRNA synthetase beta subunit family. Type 1 subfamily. In terms of assembly, tetramer of two alpha and two beta subunits. The cofactor is Mg(2+).

It localises to the cytoplasm. It catalyses the reaction tRNA(Phe) + L-phenylalanine + ATP = L-phenylalanyl-tRNA(Phe) + AMP + diphosphate + H(+). This chain is Phenylalanine--tRNA ligase beta subunit, found in Nocardia farcinica (strain IFM 10152).